Reading from the N-terminus, the 332-residue chain is Glycerol-3-phosphate dehydrogenase [NAD(P)+] 2 (332 aa).

NADPH is bound by residues S17, W18, R37, and K112. 2 residues coordinate sn-glycerol 3-phosphate: K112 and G140. A144 contacts NADPH. 5 residues coordinate sn-glycerol 3-phosphate: K195, D243, S253, R254, and N255. The Proton acceptor role is filled by K195. Residue R254 participates in NADPH binding. NADPH-binding residues include V278 and E280.

This sequence belongs to the NAD-dependent glycerol-3-phosphate dehydrogenase family.

It localises to the cytoplasm. It carries out the reaction sn-glycerol 3-phosphate + NAD(+) = dihydroxyacetone phosphate + NADH + H(+). The catalysed reaction is sn-glycerol 3-phosphate + NADP(+) = dihydroxyacetone phosphate + NADPH + H(+). Its pathway is membrane lipid metabolism; glycerophospholipid metabolism. Catalyzes the reduction of the glycolytic intermediate dihydroxyacetone phosphate (DHAP) to sn-glycerol 3-phosphate (G3P), the key precursor for phospholipid synthesis. This is Glycerol-3-phosphate dehydrogenase [NAD(P)+] 2 from Mycolicibacterium paratuberculosis (strain ATCC BAA-968 / K-10) (Mycobacterium paratuberculosis).